Reading from the N-terminus, the 696-residue chain is Zinc finger SWIM domain-containing protein 3 (696 aa).

An SWIM-type zinc finger spans residues 531–572 (VDVQLLEDSHQVSKDGCSCSCSFQQWYHLPCRHILALLHTSQ).

The protein is Zinc finger SWIM domain-containing protein 3 (ZSWIM3) of Homo sapiens (Human).